The chain runs to 322 residues: Formimidoylglutamase (322 aa).

Mn(2+)-binding residues include histidine 130, aspartate 156, histidine 158, aspartate 160, cysteine 245, and aspartate 247.

The protein belongs to the arginase family. The cofactor is Mn(2+).

It catalyses the reaction N-formimidoyl-L-glutamate + H2O = formamide + L-glutamate. It functions in the pathway amino-acid degradation; L-histidine degradation into L-glutamate; L-glutamate from N-formimidoyl-L-glutamate (hydrolase route): step 1/1. Its function is as follows. Catalyzes the conversion of N-formimidoyl-L-glutamate to L-glutamate and formamide. This is Formimidoylglutamase from Lysinibacillus sphaericus (strain C3-41).